Here is a 413-residue protein sequence, read N- to C-terminus: L-arginine-specific L-amino acid ligase (413 aa).

The ATP-grasp domain occupies 115–312 (KTKLKMEGIP…LWESSLNISV (198 aa)). 141-202 (GEKLGWPIIV…EKCIEMEEFH (62 aa)) contacts ATP. The Mg(2+) site is built by glutamate 268 and glutamate 281. 2 residues coordinate Mn(2+): glutamate 268 and glutamate 281.

As to quaternary structure, homodimer. Mg(2+) serves as cofactor. Requires Mn(2+) as cofactor. It depends on Co(2+) as a cofactor.

It catalyses the reaction an L-alpha-amino acid + L-arginine + ATP = L-arginyl-L-alpha-amino acid + ADP + phosphate + H(+). Functionally, catalyzes the synthesis of Arg-Xaa dipeptides in an ATP-dependent manner. Has strict specificity toward arginine as the N-terminal substrate. This is L-arginine-specific L-amino acid ligase from Bacillus subtilis.